The following is a 546-amino-acid chain: MNSNTKIIFVTGGVVSSLGKGVTAASLATLLESRGLNVTMMKLDPYINVDPGTMSPLQHGEVFVTEDGAETDLDLGHYERFIRNKMTQANNFTTGKVYQSVLRRERKGDYLGATIQVIPHITDEIKRRICSGIADDVDVAIVEIGGTVGDIESQPFLEAIRQLRIELGRNRTLFVHLTLLPYIKVAGEIKTKPTQHSVKELRGIGIQADVLVCRCEKKFDDSEKRKIALFTNVDQDCIFTAEDVDTIYEVPLKYNQQGFDAKLVELLNLNAKEADLSEWQNVVNTIRDVKGEVIIAMVGKYVSLTEAYKSLNEALYNAGYKKGVKVKIKFVDSEDVNENNVESYFKDVAAILVPGGFGSRGVEGKIISIKYARENQIPFLGICLGMQLAVIEYARNILGIKDAHSSELEPTTANPVIGLITEWQAEDGTVHQRTHSSDLGGTMRLGGYKCVLKQGSRAREIYQADEVVERHRHRYEVNSNYVERLEEAGLIFSGRSEDNKLMELIEIPQHKWFIACQAHPEFTSTPRYGHKLFESYIQAAIENSNN.

An amidoligase domain region spans residues 1–269 (MNSNTKIIFV…DAKLVELLNL (269 aa)). Serine 16 provides a ligand contact to CTP. Residue serine 16 participates in UTP binding. Residues 17 to 22 (SLGKGV) and aspartate 74 contribute to the ATP site. Positions 74 and 143 each coordinate Mg(2+). CTP is bound by residues 150–152 (DIE), 190–195 (KTKPTQ), and lysine 226. Residues 190-195 (KTKPTQ) and lysine 226 contribute to the UTP site. The 253-residue stretch at 294–546 (IIAMVGKYVS…IQAAIENSNN (253 aa)) folds into the Glutamine amidotransferase type-1 domain. Glycine 356 contributes to the L-glutamine binding site. Residue cysteine 383 is the Nucleophile; for glutamine hydrolysis of the active site. L-glutamine-binding positions include 384–387 (LGMQ), glutamate 407, and arginine 474. Residues histidine 519 and glutamate 521 contribute to the active site.

It belongs to the CTP synthase family. As to quaternary structure, homotetramer.

It carries out the reaction UTP + L-glutamine + ATP + H2O = CTP + L-glutamate + ADP + phosphate + 2 H(+). It catalyses the reaction L-glutamine + H2O = L-glutamate + NH4(+). The catalysed reaction is UTP + NH4(+) + ATP = CTP + ADP + phosphate + 2 H(+). It functions in the pathway pyrimidine metabolism; CTP biosynthesis via de novo pathway; CTP from UDP: step 2/2. Allosterically activated by GTP, when glutamine is the substrate; GTP has no effect on the reaction when ammonia is the substrate. The allosteric effector GTP functions by stabilizing the protein conformation that binds the tetrahedral intermediate(s) formed during glutamine hydrolysis. Inhibited by the product CTP, via allosteric rather than competitive inhibition. In terms of biological role, catalyzes the ATP-dependent amination of UTP to CTP with either L-glutamine or ammonia as the source of nitrogen. Regulates intracellular CTP levels through interactions with the four ribonucleotide triphosphates. The protein is CTP synthase of Francisella tularensis subsp. holarctica (strain FTNF002-00 / FTA).